Reading from the N-terminus, the 198-residue chain is FMN-dependent NADH:quinone oxidoreductase (198 aa).

An FMN-binding site is contributed by 92–95 (MWNL).

The protein belongs to the azoreductase type 1 family. In terms of assembly, homodimer. The cofactor is FMN.

The enzyme catalyses 2 a quinone + NADH + H(+) = 2 a 1,4-benzosemiquinone + NAD(+). It catalyses the reaction N,N-dimethyl-1,4-phenylenediamine + anthranilate + 2 NAD(+) = 2-(4-dimethylaminophenyl)diazenylbenzoate + 2 NADH + 2 H(+). Quinone reductase that provides resistance to thiol-specific stress caused by electrophilic quinones. Its function is as follows. Also exhibits azoreductase activity. Catalyzes the reductive cleavage of the azo bond in aromatic azo compounds to the corresponding amines. The sequence is that of FMN-dependent NADH:quinone oxidoreductase from Clostridium beijerinckii (strain ATCC 51743 / NCIMB 8052) (Clostridium acetobutylicum).